The chain runs to 400 residues: CCA-adding enzyme (400 aa).

Residues G28 and R31 each contribute to the ATP site. Residues G28 and R31 each contribute to the CTP site. 2 residues coordinate Mg(2+): D41 and D43. 5 residues coordinate ATP: R112, D155, R158, R161, and R164. CTP contacts are provided by R112, D155, R158, R161, and R164.

This sequence belongs to the tRNA nucleotidyltransferase/poly(A) polymerase family. Bacterial CCA-adding enzyme type 3 subfamily. Homodimer. Requires Mg(2+) as cofactor.

It carries out the reaction a tRNA precursor + 2 CTP + ATP = a tRNA with a 3' CCA end + 3 diphosphate. The enzyme catalyses a tRNA with a 3' CCA end + 2 CTP + ATP = a tRNA with a 3' CCACCA end + 3 diphosphate. Catalyzes the addition and repair of the essential 3'-terminal CCA sequence in tRNAs without using a nucleic acid template. Adds these three nucleotides in the order of C, C, and A to the tRNA nucleotide-73, using CTP and ATP as substrates and producing inorganic pyrophosphate. tRNA 3'-terminal CCA addition is required both for tRNA processing and repair. Also involved in tRNA surveillance by mediating tandem CCA addition to generate a CCACCA at the 3' terminus of unstable tRNAs. While stable tRNAs receive only 3'-terminal CCA, unstable tRNAs are marked with CCACCA and rapidly degraded. The polypeptide is CCA-adding enzyme (Staphylococcus haemolyticus (strain JCSC1435)).